A 221-amino-acid polypeptide reads, in one-letter code: UPF0502 protein PA14_19450 (221 aa).

It belongs to the UPF0502 family.

The sequence is that of UPF0502 protein PA14_19450 from Pseudomonas aeruginosa (strain UCBPP-PA14).